The primary structure comprises 495 residues: Dihydrolipoyl dehydrogenase, mitochondrial (495 aa).

FAD is bound by residues 59–68, Lys-77, and 169–171; these read EKNATLGGTC and SGS. Residues Cys-68 and Cys-73 are joined by a disulfide bond. NAD(+)-binding positions include 206–213, Glu-229, Val-264, and Gly-299; that span reads GAGVIGLE. Residues Asp-340 and 346–349 each bind FAD; that span reads MLAH. His-472 serves as the catalytic Proton acceptor.

It belongs to the class-I pyridine nucleotide-disulfide oxidoreductase family. Requires FAD as cofactor.

The protein resides in the mitochondrion matrix. It carries out the reaction N(6)-[(R)-dihydrolipoyl]-L-lysyl-[protein] + NAD(+) = N(6)-[(R)-lipoyl]-L-lysyl-[protein] + NADH + H(+). The polypeptide is Dihydrolipoyl dehydrogenase, mitochondrial (dld-1) (Caenorhabditis elegans).